Consider the following 37-residue polypeptide: Large ribosomal subunit protein bL36 (37 aa).

The protein belongs to the bacterial ribosomal protein bL36 family.

The protein is Large ribosomal subunit protein bL36 of Thermobifida fusca (strain YX).